The following is a 114-amino-acid chain: Cell cycle protein GpsB (114 aa).

The stretch at 42–77 (YQKMADMNNEVVKLSEENHKLKKELEELRLRVATSR) forms a coiled coil. Residues 74–99 (ATSRPQDNKSFSSNNTTTNTSSNNVD) are disordered. Over residues 85–97 (SSNNTTTNTSSNN) the composition is skewed to low complexity.

Belongs to the GpsB family. In terms of assembly, forms polymers through the coiled coil domains. Interacts with PBP1, MreC and EzrA.

It is found in the cytoplasm. Its function is as follows. Divisome component that associates with the complex late in its assembly, after the Z-ring is formed, and is dependent on DivIC and PBP2B for its recruitment to the divisome. Together with EzrA, is a key component of the system that regulates PBP1 localization during cell cycle progression. Its main role could be the removal of PBP1 from the cell pole after pole maturation is completed. Also contributes to the recruitment of PBP1 to the division complex. Not essential for septum formation. The sequence is that of Cell cycle protein GpsB from Staphylococcus aureus (strain Mu3 / ATCC 700698).